Reading from the N-terminus, the 314-residue chain is DNA-directed RNA polymerase subunit alpha (314 aa).

An alpha N-terminal domain (alpha-NTD) region spans residues 1–228 (MIEFEKPNIH…EHLGLFMDIS (228 aa)). The interval 242 to 314 (PVAASASDSA…DMNLGFRKED (73 aa)) is alpha C-terminal domain (alpha-CTD).

It belongs to the RNA polymerase alpha chain family. As to quaternary structure, homodimer. The RNAP catalytic core consists of 2 alpha, 1 beta, 1 beta' and 1 omega subunit. When a sigma factor is associated with the core the holoenzyme is formed, which can initiate transcription.

It catalyses the reaction RNA(n) + a ribonucleoside 5'-triphosphate = RNA(n+1) + diphosphate. DNA-dependent RNA polymerase catalyzes the transcription of DNA into RNA using the four ribonucleoside triphosphates as substrates. The polypeptide is DNA-directed RNA polymerase subunit alpha (Leuconostoc mesenteroides subsp. mesenteroides (strain ATCC 8293 / DSM 20343 / BCRC 11652 / CCM 1803 / JCM 6124 / NCDO 523 / NBRC 100496 / NCIMB 8023 / NCTC 12954 / NRRL B-1118 / 37Y)).